The sequence spans 1249 residues: Pleckstrin homology-like domain family B member 2 (1249 aa).

2 disordered regions span residues 64–85 (QPVS…SPSL) and 128–154 (DHYT…SSRN). A phosphoserine mark is found at serine 71 and serine 73. Polar residues predominate over residues 74 to 84 (PMGTSVRSSPS). Residues 128–143 (DHYTGRDSERSTRLSE) show a composition bias toward basic and acidic residues. Serine 156, serine 203, serine 241, and serine 244 each carry phosphoserine. Disordered regions lie at residues 190-248 (SPIS…LSNM) and 264-289 (NQMS…GEKD). Over residues 231–248 (ENVSVRTRKYSGSSLSNM) the composition is skewed to polar residues. Residues 267–283 (SPLSLPPRSSLGNSRRG) show a composition bias toward low complexity. Phosphoserine occurs at positions 329, 333, 347, 380, 383, 389, 411, 416, 465, 486, and 510. The interval 388 to 424 (DSDLESLRQSSETPQPVLRERKSSISSISGRDDLMDY) is disordered. Threonine 546 and threonine 570 each carry phosphothreonine. Coiled-coil stretches lie at residues 580–692 (TQEL…LDNC) and 718–803 (FEDL…LCNL). Residues 866 to 934 (VSQPQSSEHF…LGQSNSCGSV (69 aa)) form a disordered region. Residues 873 to 888 (EHFRSLEERKKQHKEG) are compositionally biased toward basic and acidic residues. Threonine 894 carries the phosphothreonine modification. The span at 901-919 (TPSLSPHFSSATMGRSTTP) shows a compositional bias: polar residues. Positions 1028–1094 (IARIEEMERL…QKLIEKEVKI (67 aa)) form a coiled coil. One can recognise a PH domain in the interval 1139–1242 (EKTCRGYLIK…WMDVIVTGAE (104 aa)).

As to quaternary structure, interacts with FLNC. Interacts with AMOTL2; interaction may facilitate PHLDB2 localization to the myotube podosome cortex that surrounds the core. Part of a cortical microtubule stabilization complex (CMSC) composed of KANK1, PPFIA1, PPFIBP1, ERC1/ELKS, PHLDB2/LL5beta, CLASPs, KIF21A and possibly additional interactors; within CMSCs KANK1 and PHLDB2/LL5beta appear to be the core components for targeting of microtubule-binding proteins KIF21A and CLASPs, whereas PPFIA1, PPFIBP1 and ERC1/ELKS serve as scaffolds for protein clustering. In terms of tissue distribution, expressed at postsynaptic membranes of skeletal neuromuscular junctions (at protein level).

It localises to the cytoplasm. Its subcellular location is the membrane. The protein localises to the cell projection. The protein resides in the podosome. It is found in the cell cortex. Its function is as follows. Seems to be involved in the assembly of the postsynaptic apparatus. May play a role in acetyl-choline receptor (AChR) aggregation in the postsynaptic membrane. The protein is Pleckstrin homology-like domain family B member 2 (Phldb2) of Mus musculus (Mouse).